Here is a 184-residue protein sequence, read N- to C-terminus: Antigen Sm21.7 (184 aa).

The EF-hand domain occupies 37 to 72 (LDMKQVNEWIALFDVDKDQKITFEEFCRGLGLKQNE). Ca(2+)-binding residues include D50, D52, D54, K56, and E61.

The polypeptide is Antigen Sm21.7 (SM21.7) (Schistosoma mansoni (Blood fluke)).